Reading from the N-terminus, the 161-residue chain is Phosphopantetheine adenylyltransferase (161 aa).

Ser-11 provides a ligand contact to substrate. Residues 11–12 and His-19 each bind ATP; that span reads SF. Substrate is bound by residues Lys-43, Leu-75, and Arg-89. ATP contacts are provided by residues 90 to 92, Glu-100, and 125 to 131; these read GLR and YSFISSS.

This sequence belongs to the bacterial CoaD family. As to quaternary structure, homohexamer. It depends on Mg(2+) as a cofactor.

It localises to the cytoplasm. The catalysed reaction is (R)-4'-phosphopantetheine + ATP + H(+) = 3'-dephospho-CoA + diphosphate. It participates in cofactor biosynthesis; coenzyme A biosynthesis; CoA from (R)-pantothenate: step 4/5. Its function is as follows. Reversibly transfers an adenylyl group from ATP to 4'-phosphopantetheine, yielding dephospho-CoA (dPCoA) and pyrophosphate. In Staphylococcus saprophyticus subsp. saprophyticus (strain ATCC 15305 / DSM 20229 / NCIMB 8711 / NCTC 7292 / S-41), this protein is Phosphopantetheine adenylyltransferase.